A 562-amino-acid chain; its full sequence is Catalase T (562 aa).

Active-site residues include His64 and Asn137. Tyr351 provides a ligand contact to heme.

The protein belongs to the catalase family. As to quaternary structure, homotetramer. The cofactor is heme.

Its subcellular location is the cytoplasm. It catalyses the reaction 2 H2O2 = O2 + 2 H2O. Its function is as follows. Occurs in almost all aerobically respiring organisms and serves to protect cells from the toxic effects of hydrogen peroxide. The polypeptide is Catalase T (CTT1) (Saccharomyces cerevisiae (strain ATCC 204508 / S288c) (Baker's yeast)).